We begin with the raw amino-acid sequence, 279 residues long: Sulfur carrier protein FdhD (279 aa).

The Cysteine persulfide intermediate role is filled by Cys-122.

This sequence belongs to the FdhD family.

It localises to the cytoplasm. Functionally, required for formate dehydrogenase (FDH) activity. Acts as a sulfur carrier protein that transfers sulfur from IscS to the molybdenum cofactor prior to its insertion into FDH. In Thermoplasma volcanium (strain ATCC 51530 / DSM 4299 / JCM 9571 / NBRC 15438 / GSS1), this protein is Sulfur carrier protein FdhD.